The chain runs to 714 residues: Probable serine/threonine-protein kinase mkcB (714 aa).

The span at 1–12 shows a compositional bias: basic residues; it reads MKSILKKAKHFF. Disordered regions lie at residues 1 to 267 and 281 to 349; these read MKSI…SSTS and GSGS…EQKP. Over residues 23-35 the composition is skewed to basic and acidic residues; the sequence is GGEKTAKESESQQ. The segment covering 62 to 83 has biased composition (low complexity); it reads SQSQPTTSALQTSTSLQPSSSL. Polar residues predominate over residues 84 to 94; sequence HQIPQSQSSLE. Composition is skewed to low complexity over residues 95–111 and 120–166; these read LTTNPTQQLPTTPTKQL and PHSQ…TLTT. The span at 167 to 177 shows a compositional bias: polar residues; that stretch reads PVPSSENLATL. 2 stretches are compositionally biased toward low complexity: residues 178-241 and 254-267; these read STST…QEQT and LSQSTTSSSTSSTS. Residues 282–294 show a composition bias toward polar residues; it reads SGSTKNKDSSSAP. Low complexity-rich tracts occupy residues 300–314 and 324–337; these read NNNNNTVSSSNKNRS and NNNNNNQNNHKNNN. One can recognise a Protein kinase domain in the interval 438–687; sequence YKDSDQVGKG…AEELLKHPFI (250 aa). ATP-binding positions include 444 to 452 and Lys-467; that span reads VGKGGFGTV. Asp-558 functions as the Proton acceptor in the catalytic mechanism.

The protein belongs to the protein kinase superfamily. STE Ser/Thr protein kinase family. STE20 subfamily. Mg(2+) is required as a cofactor. In terms of tissue distribution, expressed at equal levels in prestalk and prespore cells.

It carries out the reaction L-seryl-[protein] + ATP = O-phospho-L-seryl-[protein] + ADP + H(+). The catalysed reaction is L-threonyl-[protein] + ATP = O-phospho-L-threonyl-[protein] + ADP + H(+). The chain is Probable serine/threonine-protein kinase mkcB from Dictyostelium discoideum (Social amoeba).